A 453-amino-acid chain; its full sequence is Anthocyanidin 3-O-glucosyltransferase (453 aa).

The active-site Proton acceptor is the His-17. His-17 lines the an anthocyanidin pocket. Asp-117 (charge relay) is an active-site residue. Thr-139 provides a ligand contact to UDP-alpha-D-glucose. An an anthocyanidin-binding site is contributed by His-148. Residues Ala-331, Gln-333, His-348, Trp-351, Asn-352, Ser-353, and Glu-356 each coordinate UDP-alpha-D-glucose. Gly-371 contributes to the an anthocyanidin binding site. Residues Asp-372 and Gln-373 each contribute to the UDP-alpha-D-glucose site.

The protein belongs to the UDP-glycosyltransferase family.

It catalyses the reaction an anthocyanidin + UDP-alpha-D-glucose + H(+) = an anthocyanidin 3-O-beta-D-glucoside + UDP. The enzyme catalyses delphinidin + UDP-alpha-D-glucose = delphinidin 3-O-beta-D-glucoside + UDP. It carries out the reaction pelargonidin + UDP-alpha-D-glucose = pelargonidin 3-O-beta-D-glucoside + UDP. The catalysed reaction is cyanidin + UDP-alpha-D-glucose = cyanidin 3-O-beta-D-glucoside + UDP + H(+). It functions in the pathway pigment biosynthesis; anthocyanin biosynthesis. Functionally, in the presence of other necessary color factors, this glycosylation reaction allows the accumulation of anthocyanin pigments. Anthocyanidins are the preferred substrates, while flavonols are only a minor substrate in vitro. This Gentiana triflora (Clustered gentian) protein is Anthocyanidin 3-O-glucosyltransferase.